The sequence spans 354 residues: MNGTEGPNFYVPFSNKSGVVRSPFEYPQYYLAEPWQYSVLAAYMFLLILLGFPVNFLTLYVTIQHKKLRTPLNYILLNLAFANHFMVFGGFPVTMYSSMHGYFVFGQTGCYIEGFFATMGGEIALWSLVVLAIERYVVVCKPMSNFRFGENHAIMGVMMTWIMALACAAPPLFGWSRYIPEGMQCSCGVDYYTLKPEVNNESFVIYMFLVHFTIPLMIIFFCYGRLVCTVKEAAAQQQESATTQKAEKEVTRMVIIMVVAFLICWVPYASVAFYIFSNQGTDFGPIFMTVPAFFAKSSAIYNPVIYIVLNKQFRNCMITTICCGKNPFGDDETTSAATSKTEASSVSSSQVSPA.

Over 1-36 the chain is Extracellular; that stretch reads MNGTEGPNFYVPFSNKSGVVRSPFEYPQYYLAEPWQ. N-linked (GlcNAc...) asparagine glycosylation is found at Asn-2 and Asn-15. Residues 37 to 61 traverse the membrane as a helical segment; it reads YSVLAAYMFLLILLGFPVNFLTLYV. Residues 62–73 lie on the Cytoplasmic side of the membrane; that stretch reads TIQHKKLRTPLN. Residues 74 to 96 traverse the membrane as a helical segment; sequence YILLNLAFANHFMVFGGFPVTMY. The Extracellular segment spans residues 97–110; that stretch reads SSMHGYFVFGQTGC. A disulfide bond links Cys-110 and Cys-187. A helical membrane pass occupies residues 111–133; sequence YIEGFFATMGGEIALWSLVVLAI. The 'Ionic lock' involved in activated form stabilization motif lies at 134-136; sequence ERY. Residues 134-152 are Cytoplasmic-facing; it reads ERYVVVCKPMSNFRFGENH. The chain crosses the membrane as a helical span at residues 153–173; it reads AIMGVMMTWIMALACAAPPLF. Topologically, residues 174–202 are extracellular; sequence GWSRYIPEGMQCSCGVDYYTLKPEVNNES. Residues 203 to 224 traverse the membrane as a helical segment; sequence FVIYMFLVHFTIPLMIIFFCYG. Residues 225–252 lie on the Cytoplasmic side of the membrane; that stretch reads RLVCTVKEAAAQQQESATTQKAEKEVTR. The helical transmembrane segment at 253 to 274 threads the bilayer; that stretch reads MVIIMVVAFLICWVPYASVAFY. Residues 275–286 lie on the Extracellular side of the membrane; that stretch reads IFSNQGTDFGPI. The chain crosses the membrane as a helical span at residues 287-308; sequence FMTVPAFFAKSSAIYNPVIYIV. Lys-296 carries the N6-(retinylidene)lysine modification. Residues 309–354 lie on the Cytoplasmic side of the membrane; the sequence is LNKQFRNCMITTICCGKNPFGDDETTSAATSKTEASSVSSSQVSPA. Residues Cys-322 and Cys-323 are each lipidated (S-palmitoyl cysteine). A disordered region spans residues 332-354; sequence ETTSAATSKTEASSVSSSQVSPA. Residues 334 to 354 show a composition bias toward low complexity; it reads TSAATSKTEASSVSSSQVSPA.

The protein belongs to the G-protein coupled receptor 1 family. Opsin subfamily. Post-translationally, contains one covalently linked retinal chromophore. Upon light absorption, the covalently bound 11-cis-retinal is converted to all-trans-retinal. After hydrolysis of the Schiff base and release of the covalently bound all-trans-retinal, active rhodopsin is regenerated by binding of a fresh molecule of 11-cis-retinal.

It is found in the membrane. The protein resides in the cell projection. It localises to the cilium. Its subcellular location is the photoreceptor outer segment. Its function is as follows. Photoreceptor required for image-forming vision at low light intensity. Required for photoreceptor cell viability after birth. Light-induced isomerization of 11-cis to all-trans retinal triggers a conformational change that activates signaling via G-proteins. Subsequent receptor phosphorylation mediates displacement of the bound G-protein alpha subunit by arrestin and terminates signaling. The sequence is that of Rhodopsin (RHO) from Ambystoma tigrinum (Eastern tiger salamander).